Reading from the N-terminus, the 494-residue chain is WD repeat-containing protein 37 (494 aa).

Composition is skewed to polar residues over residues methionine 1–glutamine 13 and serine 22–serine 31. A disordered region spans residues methionine 1 to leucine 50. The span at glutamate 32 to aspartate 47 shows a compositional bias: basic and acidic residues. WD repeat units follow at residues glycine 154–lysine 194 and glycine 197–glutamine 236. The tract at residues proline 237–serine 265 is disordered. Positions glycine 245–valine 263 are enriched in acidic residues. 5 WD repeats span residues serine 279–serine 318, glycine 321–valine 360, glycine 365–alanine 403, arginine 406–leucine 445, and glycine 452–glutamate 493.

In terms of assembly, forms homodimers. Interacts with PACS1. Interacts with PACS2.

It localises to the cytoplasm. Its subcellular location is the nucleus. Its function is as follows. Required for normal ER Ca2+ handling in lymphocytes. Together with PACS1, it plays an essential role in stabilizing peripheral lymphocyte populations. The polypeptide is WD repeat-containing protein 37 (WDR37) (Homo sapiens (Human)).